A 599-amino-acid chain; its full sequence is Estrogen receptor (599 aa).

The interval 1-188 (MTMTLHTKAS…IMESAKETRY (188 aa)) is modulating (transactivation AF-1); mediates interaction with MACROD1. The O-linked (GlcNAc) serine glycan is linked to Ser10. Residues 35-47 (MERALGEVYVDNS) are required for interaction with NCOA1. Residues 35 to 178 (MERALGEVYV…LSSSNEKGNM (144 aa)) are interaction with DDX5; self-association. Thr50 is a glycosylation site (O-linked (GlcNAc) threonine). Ser108 and Ser110 each carry phosphoserine; by CDK2. The residue at position 122 (Ser122) is a Phosphoserine. Residues 147–175 (DTGPPAFYRSNSDNRRQNGRERLSSSNEK) are disordered. The span at 158 to 169 (SDNRRQNGRERL) shows a compositional bias: basic and acidic residues. Ser171 is modified (phosphoserine; by CK2). NR C4-type zinc fingers lie at residues 189–209 (CAVC…CEGC) and 225–249 (CPAT…LRKC). The nuclear receptor DNA-binding region spans 189-254 (CAVCNDYASG…RLRKCYEVGM (66 aa)). Positions 189 to 314 (CAVCNDYASG…TKKNSPALSL (126 aa)) are mediates interaction with DNTTIP2. A hinge region spans residues 255-314 (MKGGIRKDRRGGRMLKHKRQRDDLEGRNEMGASGDMRAANLWPSPLVIKHTKKNSPALSL). An Asymmetric dimethylarginine; by PRMT1 modification is found at Arg264. The interaction with AKAP13 stretch occupies residues 266–599 (GRMLKHKRQR…PEAEGFPNTI (334 aa)). Positions 268–599 (MLKHKRQRDD…PEAEGFPNTI (332 aa)) are self-association. Residues 315-551 (TADQMVSALL…DLLLEMLDAH (237 aa)) form the NR LBD domain. The interval 315–599 (TADQMVSALL…PEAEGFPNTI (285 aa)) is transactivation AF-2. Residues Glu357 and Arg398 each coordinate 17beta-estradiol. A lipid anchor (S-palmitoyl cysteine) is attached at Cys451. His528 contributes to the 17beta-estradiol binding site. Tyr541 carries the post-translational modification Phosphotyrosine; by Tyr-kinases. The tract at residues 557 to 581 (ASRMGVPPEEPSQTQLATTSSTSAH) is disordered. A compositionally biased stretch (low complexity) spans 568–581 (SQTQLATTSSTSAH). O-linked (GlcNAc) threonine glycosylation is present at Thr575.

This sequence belongs to the nuclear hormone receptor family. NR3 subfamily. In terms of assembly, interacts with BCAS3. Binds DNA as a homodimer. Can form a heterodimer with ESR2. Interacts with coactivator NCOA5. Interacts with PELP1, the interaction is enhanced by 17-beta-estradiol; the interaction increases ESR1 transcriptional activity. Interacts with NCOA7; the interaction is ligand-inducible. Interacts with AKAP13, CUEDC2, HEXIM1, KDM5A, MAP1S, SMARD1, and UBE1C. Interacts with MUC1; the interaction is stimulated by 7 beta-estradiol (E2) and enhances ESR1-mediated transcription. Interacts with DNTTIP2, and UIMC1. Interacts with KMT2D/MLL2. Interacts with ATAD2; the interaction is enhanced by estradiol. Interacts with KIF18A and LDB1. Interacts with RLIM (via its C-terminus). Interacts with MACROD1. Interacts with SH2D4A and PLCG. Interacts with SH2D4A; the interaction blocks binding to PLCG and inhibits estrogen-induced cell proliferation. Interacts with DYNLL1. Interacts with CCDC62; the interaction requires estradiol and appears to enhance the transcription of target genes. Interacts with NR2C1; the interaction prevents homodimerization of ESR1 and suppresses its transcriptional activity and cell growth. Interacts with DNAAF4. Interacts with PRMT2. Interacts with RBFOX2. Interacts with EP300; the interaction is estrogen-dependent and enhanced by CITED1. Interacts with CITED1; the interaction is estrogen-dependent. Interacts with FAM120B, FOXL2, PHB2 and SLC30A9. Interacts with coactivators NCOA3 and NCOA6. Interacts with STK3/MST2 only in the presence of SAV1 and vice-versa. Binds to CSNK1D. Interacts with NCOA2; NCOA2 can interact with ESR1 AF-1 and AF-2 domains simultaneously and mediate their transcriptional synergy. Interacts with DDX5. Interacts with NCOA1; the interaction seems to require a self-association of N-terminal and C-terminal regions. Interacts with ZNF366, DDX17, NFKB1, RELA, SP1 and SP3. Interacts with NRIP1. Interacts with GPER1; the interaction occurs in an estrogen-dependent manner. Interacts with CLOCK and the interaction is stimulated by estrogen. Interacts with BCAS3. Interacts with TRIP4 (ufmylated); estrogen dependent. Interacts with LMTK3; the interaction phosphorylates ESR1 (in vitro) and protects it against proteasomal degradation. Interacts with CCAR2 (via N-terminus) in a ligand-independent manner. Interacts with ZFHX3. Interacts with SFR1 in a ligand-dependent and -independent manner. Interacts with DCAF13, LATS1 and DCAF1; regulates ESR1 ubiquitination and ubiquitin-mediated proteasomal degradation. Interacts (via DNA-binding domain) with POU4F2 isoform 2 (C-terminus); this interaction increases the estrogen receptor ESR1 transcriptional activity in a DNA- and ligand 17-beta-estradiol-independent manner. Interacts with ESRRB isoform 1. Interacts with UBE3A and WBP2. Interacts with GTF2B. Interacts with RBM39. In the absence of hormonal ligand, interacts with TACC1. Interacts with PI3KR1 or PI3KR2 and PTK2/FAK1. Interacts with SRC. Interacts with BAG1; the interaction is promoted in the absence of estradiol (17-beta-estradiol/E2). Interacts with and ubiquitinated by STUB1; the interaction is promoted in the absence of estradiol (17-beta-estradiol/E2). Interacts with NEDD8. In terms of processing, phosphorylated by cyclin A/CDK2 and CK1. Phosphorylation probably enhances transcriptional activity. Dephosphorylation at Ser-122 by PPP5C inhibits its transactivation activity. Phosphorylated by LMTK3 (in vitro). Ubiquitinated. Deubiquitinated by OTUB1. Post-translationally, palmitoylated at Cys-451 by ZDHHC7 and ZDHHC21. This modification is required for plasma membrane targeting and for rapid intracellular signaling via ERK and AKT kinases and cAMP generation, but not for signaling mediated by the nuclear hormone receptor. In terms of processing, ubiquitinated; regulated by LATS1 via DCAF1 it leads to ESR1 proteasomal degradation. Deubiquitinated by OTUB1. Ubiquitinated by STUB1/CHIP; in the CA1 hippocampal region following loss of endogenous circulating estradiol (17-beta-estradiol/E2). Ubiquitinated by UBR5, leading to its degradation: UBR5 specifically recognizes and binds ligand-bound ESR1 when it is not associated with coactivators (NCOAs). In presence of NCOAs, the UBR5-degron is not accessible, preventing its ubiquitination and degradation. Dimethylated by PRMT1 at Arg-264. The methylation may favor cytoplasmic localization. Demethylated by JMJD6 at Arg-264.

The protein resides in the nucleus. It localises to the cytoplasm. It is found in the golgi apparatus. Its subcellular location is the cell membrane. Its function is as follows. Nuclear hormone receptor. The steroid hormones and their receptors are involved in the regulation of eukaryotic gene expression and affect cellular proliferation and differentiation in target tissues. Ligand-dependent nuclear transactivation involves either direct homodimer binding to a palindromic estrogen response element (ERE) sequence or association with other DNA-binding transcription factors, such as AP-1/c-Jun, c-Fos, ATF-2, Sp1 and Sp3, to mediate ERE-independent signaling. Ligand binding induces a conformational change allowing subsequent or combinatorial association with multiprotein coactivator complexes through LXXLL motifs of their respective components. Mutual transrepression occurs between the estrogen receptor (ER) and NF-kappa-B in a cell-type specific manner. Decreases NF-kappa-B DNA-binding activity and inhibits NF-kappa-B-mediated transcription from the IL6 promoter and displace RELA/p65 and associated coregulators from the promoter. Recruited to the NF-kappa-B response element of the CCL2 and IL8 promoters and can displace CREBBP. Present with NF-kappa-B components RELA/p65 and NFKB1/p50 on ERE sequences. Can also act synergistically with NF-kappa-B to activate transcription involving respective recruitment adjacent response elements; the function involves CREBBP. Can activate the transcriptional activity of TFF1. Also mediates membrane-initiated estrogen signaling involving various kinase cascades. Essential for MTA1-mediated transcriptional regulation of BRCA1 and BCAS3. Maintains neuronal survival in response to ischemic reperfusion injury when in the presence of circulating estradiol (17-beta-estradiol/E2). The polypeptide is Estrogen receptor (Esr1) (Mus musculus (Mouse)).